Here is a 604-residue protein sequence, read N- to C-terminus: Rhotekin-2 (604 aa).

An REM-1 domain is found at 1–74 (MEGQLLRGLA…LQKSKEEIAN (74 aa)). Residues 53–79 (VCSARIQAYTAELQKSKEEIANQTGAR) are a coiled coil. Residues 281 to 387 (ADAFAGFLNE…WMGAFRQHFF (107 aa)) enclose the PH domain. The segment at 481–590 (LSPIGEPAPD…PVPVPRQKSI (110 aa)) is disordered. A compositionally biased stretch (polar residues) spans 514 to 527 (GRANQSKDSATQAG). Over residues 529–543 (SGASSSPSDPRLSPP) the composition is skewed to low complexity.

Its function is as follows. May play an important role in lymphopoiesis. The chain is Rhotekin-2 (Rtkn2) from Mus musculus (Mouse).